We begin with the raw amino-acid sequence, 308 residues long: Aspartate carbamoyltransferase catalytic subunit (308 aa).

Residues Arg-57 and Thr-58 each coordinate carbamoyl phosphate. An L-aspartate-binding site is contributed by Lys-86. Residues Arg-107, His-135, and Gln-138 each contribute to the carbamoyl phosphate site. 2 residues coordinate L-aspartate: Arg-168 and Arg-228. Leu-267 and Pro-268 together coordinate carbamoyl phosphate.

Belongs to the aspartate/ornithine carbamoyltransferase superfamily. ATCase family. In terms of assembly, heterododecamer (2C3:3R2) of six catalytic PyrB chains organized as two trimers (C3), and six regulatory PyrI chains organized as three dimers (R2).

The enzyme catalyses carbamoyl phosphate + L-aspartate = N-carbamoyl-L-aspartate + phosphate + H(+). Its pathway is pyrimidine metabolism; UMP biosynthesis via de novo pathway; (S)-dihydroorotate from bicarbonate: step 2/3. In terms of biological role, catalyzes the condensation of carbamoyl phosphate and aspartate to form carbamoyl aspartate and inorganic phosphate, the committed step in the de novo pyrimidine nucleotide biosynthesis pathway. This chain is Aspartate carbamoyltransferase catalytic subunit, found in Leptospira interrogans serogroup Icterohaemorrhagiae serovar Lai (strain 56601).